A 138-amino-acid polypeptide reads, in one-letter code: MRHNKSGRKLGRTAAHRKAMLRNMARSLLIHERIRTTEHKAKELRGVVEQLVTLAQTDSVHARRMAYKVLENHQLVARLFNEIGPRFTGQPGGYTRVVKMSLPRAGDCAAMAIIELTKLAGAAPAGQEQAPKDASSEA.

This sequence belongs to the bacterial ribosomal protein bL17 family. In terms of assembly, part of the 50S ribosomal subunit. Contacts protein L32.

The protein is Large ribosomal subunit protein bL17 of Solidesulfovibrio magneticus (strain ATCC 700980 / DSM 13731 / RS-1) (Desulfovibrio magneticus).